The following is a 330-amino-acid chain: Aspartate--ammonia ligase (330 aa).

It belongs to the class-II aminoacyl-tRNA synthetase family. AsnA subfamily.

Its subcellular location is the cytoplasm. It carries out the reaction L-aspartate + NH4(+) + ATP = L-asparagine + AMP + diphosphate + H(+). The protein operates within amino-acid biosynthesis; L-asparagine biosynthesis; L-asparagine from L-aspartate (ammonia route): step 1/1. In Streptococcus thermophilus (strain ATCC BAA-250 / LMG 18311), this protein is Aspartate--ammonia ligase.